The primary structure comprises 2344 residues: Pecanex-like protein 1 (2344 aa).

Transmembrane regions (helical) follow at residues 33-53 and 57-77; these read ALHL…YMAL and MIIV…LKMV. Disordered stretches follow at residues 101–163, 271–290, 306–692, and 749–837; these read QRAK…GSSR, SHSY…SSSA, QQQR…TRAR, and VTRS…VQSR. A compositionally biased stretch (polar residues) spans 143-163; sequence SSRNSYAGLDPSNQIGSGSSR. Basic residues predominate over residues 272–282; the sequence is HSYRKEHRPRG. Positions 328-343 are enriched in polar residues; it reads RESSAGKSCPPAQSQP. A compositionally biased stretch (low complexity) spans 372–390; the sequence is SLRSLSTRSSGSTESYCSG. The span at 396–406 shows a compositional bias: polar residues; that stretch reads NSTLSSYKSEQ. Composition is skewed to basic and acidic residues over residues 416–458, 508–522, and 531–547; these read LSEH…DKTA, RPPE…EQSE, and RVCK…DVRP. Positions 557 to 572 are enriched in basic residues; that stretch reads TSAHKPGRRRTGKKRA. Low complexity predominate over residues 616-638; it reads SIHSAHQFSSDSSSSATSHSCQS. Residues 749–758 show a composition bias toward polar residues; the sequence is VTRSRNSLPS. 2 stretches are compositionally biased toward low complexity: residues 770–781 and 817–835; these read AATGAAQASEEA and LSLQ…VKVQ. 3 helical membrane passes run 1010 to 1030, 1035 to 1055, and 1069 to 1089; these read ILAV…LIQG, IWVF…LKSV, and IIAY…WLLD. N-linked (GlcNAc...) asparagine glycosylation is present at Asn1094. A helical membrane pass occupies residues 1119–1139; sequence LVIVFTLCFPIVFFIGLLPQV. The N-linked (GlcNAc...) asparagine glycan is linked to Asn1158. Transmembrane regions (helical) follow at residues 1163-1183, 1196-1216, 1269-1289, and 1297-1317; these read LLAA…LYGL, HVPV…YHLS, LVVC…TVFT, and YVLY…LPQV. N-linked (GlcNAc...) asparagine glycosylation is found at Asn1582, Asn1723, Asn1985, and Asn2075. The interval 2051 to 2123 is disordered; it reads EDSDTGGGTS…SSLVRQSPAR (73 aa). Polar residues-rich tracts occupy residues 2061-2081 and 2095-2118; these read CPGN…QGST and PTTS…SLVR. Asn2231, Asn2237, and Asn2263 each carry an N-linked (GlcNAc...) asparagine glycan.

It belongs to the pecanex family.

The protein resides in the membrane. In Mus musculus (Mouse), this protein is Pecanex-like protein 1.